We begin with the raw amino-acid sequence, 1086 residues long: NAD(P) transhydrogenase, mitochondrial (1086 aa).

The transit peptide at 1–43 (MANLLKTVVTGCSCPFLSNLGSCKVLPGKKNFLRTFHTHRILW) directs the protein to the mitochondrion. The Mitochondrial matrix segment spans residues 44-474 (CSAPVKPGIP…TITPFRKTMT (431 aa)). Lysine 70 carries the N6-acetyllysine modification. Lysine 117 is subject to N6-succinyllysine. An NAD(+)-binding site is contributed by 182–184 (RVT). Lysine 224 is subject to N6-succinyllysine. NAD(+)-binding positions include valine 237, 257 to 259 (DTR), and glycine 287. Residue lysine 294 is modified to N6-succinyllysine. NAD(+) contacts are provided by glutamate 300 and leucine 319. An N6-succinyllysine modification is found at lysine 331. The residue at position 397 (lysine 397) is an N6-acetyllysine. The next 4 membrane-spanning stretches (helical) occupy residues 475 to 493 (SASVYTAGLTGILGLGIAA), 501 to 521 (MVTTFGLAGIVGYHTVWGVTP), 527 to 546 (LMSVTNAISGLTAVGGLVLM), and 558 to 578 (GLAALATFISSVNIAGGFLVT). At 579-595 (QRMLDMFKRPTDPPEYN) the chain is on the mitochondrial matrix side. 5 helical membrane passes run 596-616 (YLYLLPAGTFVGGYLASLYSG), 622-642 (IMYLGSGLCCVGALAGLSTQG), 646-666 (LGNALGMIGVAGGLAATLGGL), 672-691 (LLAQMSGAMALGGTIGLTIA), and 702-722 (LVAAFHSLVGLAAVLTCIAEY). The Cytoplasmic segment spans residues 723 to 739 (IIEYPHFATDAAANLTK). 5 consecutive transmembrane segments (helical) span residues 740 to 760 (IVAYLGTYIGGVTFSGSLVAY), 778 to 797 (HLLNAGLLAGSVGGIIPFMM), 801 to 819 (FTTGITCLGSVSALSAVMG), 833 to 853 (VVITVLNSYSGWALCAEGFLL), and 857 to 879 (LLTIVGALIGSSGAILSYIMCVA). Over 880–1086 (MNRSLANVIL…QAKVRESYQK (207 aa)) the chain is Mitochondrial matrix. Residues tyrosine 933, 965 to 970 (VAGRMP), 1009 to 1011 (NDT), 1026 to 1027 (GM), 1042 to 1049 (KRSLGVGY), and 1068 to 1069 (DA) each bind NADP(+). An N6-succinyllysine modification is found at lysine 1079.

In the N-terminal section; belongs to the AlaDH/PNT family. This sequence in the C-terminal section; belongs to the PNT beta subunit family. In terms of assembly, homodimer.

The protein localises to the mitochondrion inner membrane. The catalysed reaction is NAD(+) + NADPH + H(+)(in) = NADH + NADP(+) + H(+)(out). Its function is as follows. The transhydrogenation between NADH and NADP is coupled to respiration and ATP hydrolysis and functions as a proton pump across the membrane. May play a role in reactive oxygen species (ROS) detoxification in the adrenal gland. In Bos taurus (Bovine), this protein is NAD(P) transhydrogenase, mitochondrial (NNT).